Here is a 101-residue protein sequence, read N- to C-terminus: MSQKIRIKLKSYDYMLVDKSAEKIVKTVKAAGAMVSGPIPLPTHKRIFTVNRSTFVNKKSREQFELSSYKRLIDIYNSTAKTVDALMKLELPSGVEVEIKV.

Belongs to the universal ribosomal protein uS10 family. As to quaternary structure, part of the 30S ribosomal subunit.

Functionally, involved in the binding of tRNA to the ribosomes. This chain is Small ribosomal subunit protein uS10, found in Porphyromonas gingivalis (strain ATCC 33277 / DSM 20709 / CIP 103683 / JCM 12257 / NCTC 11834 / 2561).